The following is a 474-amino-acid chain: tRNA-2-methylthio-N(6)-dimethylallyladenosine synthase (474 aa).

One can recognise an MTTase N-terminal domain in the interval 3–120 (KKLHIKTWGC…LPEMINHVNG (118 aa)). [4Fe-4S] cluster is bound by residues C12, C49, C83, C157, C161, and C164. Residues 143–375 (RAEGPTAFVS…QERITQQAMQ (233 aa)) enclose the Radical SAM core domain. One can recognise a TRAM domain in the interval 378–441 (RRMKGKVQRI…PNSLRGVLLR (64 aa)).

Belongs to the methylthiotransferase family. MiaB subfamily. As to quaternary structure, monomer. Requires [4Fe-4S] cluster as cofactor.

Its subcellular location is the cytoplasm. The enzyme catalyses N(6)-dimethylallyladenosine(37) in tRNA + (sulfur carrier)-SH + AH2 + 2 S-adenosyl-L-methionine = 2-methylsulfanyl-N(6)-dimethylallyladenosine(37) in tRNA + (sulfur carrier)-H + 5'-deoxyadenosine + L-methionine + A + S-adenosyl-L-homocysteine + 2 H(+). Functionally, catalyzes the methylthiolation of N6-(dimethylallyl)adenosine (i(6)A), leading to the formation of 2-methylthio-N6-(dimethylallyl)adenosine (ms(2)i(6)A) at position 37 in tRNAs that read codons beginning with uridine. The chain is tRNA-2-methylthio-N(6)-dimethylallyladenosine synthase from Sodalis glossinidius (strain morsitans).